A 366-amino-acid chain; its full sequence is Growth/differentiation factor 3 (366 aa).

An N-terminal signal peptide occupies residues 1–22 (MQPYQRLLALGFLLLTLPWGQT). Positions 23–252 (SEFQDSDLLQ…HCHPSSRKRR (230 aa)) are excised as a propeptide. N-linked (GlcNAc...) asparagine glycans are attached at residues Asn113 and Asn308. Intrachain disulfides connect Cys266/Cys331, Cys295/Cys363, and Cys299/Cys365.

This sequence belongs to the TGF-beta family. As to quaternary structure, homodimer. Heterodimer (Potential). But, in contrast to other members of this family, cannot be disulfide-linked. Synthesized as large precursor molecule that undergo proteolytic cleavage, releasing the pro-domain from the active, receptor binding, C-terminal region of the molecule. As to expression, primarily in adult bone marrow, spleen, thymus and adipose tissue.

It localises to the secreted. The protein localises to the cytoplasm. Functionally, growth factor involved in early embryonic development and adipose-tissue homeostasis. During embryogenesis controls formation of anterior visceral endoderm and mesoderm and the establishment of anterior-posterior identity through a receptor complex comprising the receptor ACVR1B and the coreceptor CRIPTO. Regulates adipose-tissue homeostasis and energy balance under nutrient overload in part by signaling through the receptor complex based on ACVR1C and CRIPTO. The sequence is that of Growth/differentiation factor 3 (Gdf3) from Mus musculus (Mouse).